The chain runs to 115 residues: Thrombospondin type-1 domain-containing protein 8 (115 aa).

The N-terminal stretch at 1–21 is a signal peptide; sequence MARTPGALLLAPLLLLQLATP. The TSP type-1 domain maps to 53-104; sequence DSILGPWGKWRCLCDLGKQERSREVVGTAPGPVFMDPEKLIQLRPCRQRDCP.

The sequence is that of Thrombospondin type-1 domain-containing protein 8 from Homo sapiens (Human).